The following is a 172-amino-acid chain: Large ribosomal subunit protein uL10 (172 aa).

Belongs to the universal ribosomal protein uL10 family. As to quaternary structure, part of the ribosomal stalk of the 50S ribosomal subunit. The N-terminus interacts with L11 and the large rRNA to form the base of the stalk. The C-terminus forms an elongated spine to which L12 dimers bind in a sequential fashion forming a multimeric L10(L12)X complex.

Forms part of the ribosomal stalk, playing a central role in the interaction of the ribosome with GTP-bound translation factors. This is Large ribosomal subunit protein uL10 from Chlorobium limicola (strain DSM 245 / NBRC 103803 / 6330).